A 68-amino-acid polypeptide reads, in one-letter code: Large ribosomal subunit protein bL31 (68 aa).

4 residues coordinate Zn(2+): Cys-17, Cys-19, Cys-37, and Cys-40.

This sequence belongs to the bacterial ribosomal protein bL31 family. Type A subfamily. In terms of assembly, part of the 50S ribosomal subunit. Requires Zn(2+) as cofactor.

Functionally, binds the 23S rRNA. The sequence is that of Large ribosomal subunit protein bL31 from Clostridium perfringens (strain ATCC 13124 / DSM 756 / JCM 1290 / NCIMB 6125 / NCTC 8237 / Type A).